The sequence spans 389 residues: Putative cyclin-F3-1 (389 aa).

Residues 1-103 (MEAAAAAAAE…GAAGGSRQPV (103 aa)) form a disordered region. The segment covering 19–43 (VEGAAVAAVAPEAAAEGPSEPNAGE) has biased composition (low complexity).

This sequence belongs to the cyclin family. Cyclin F subfamily.

The sequence is that of Putative cyclin-F3-1 (CYCF3-1) from Oryza sativa subsp. japonica (Rice).